We begin with the raw amino-acid sequence, 917 residues long: Catenin alpha (917 aa).

Phosphothreonine occurs at positions 643 and 645. Phosphoserine occurs at positions 659 and 662. Residues 878–890 (PLVRPEKPEEVRA) show a composition bias toward basic and acidic residues. Residues 878-905 (PLVRPEKPEEVRAKVRKGSQKKVQNPIH) are disordered.

This sequence belongs to the vinculin/alpha-catenin family. As to quaternary structure, interacts with arm/armadillo protein. In terms of processing, rapidly phosphorylated by CK2 and more slowly by CK1.

The protein localises to the cytoplasm. The protein resides in the cytoskeleton. It localises to the cell junction. Its subcellular location is the adherens junction. It is found in the cell membrane. Associates with the cytoplasmic domain of a variety of cadherins. The association of catenins to cadherins produces a complex which is linked to the actin filament network, and which seems to be of primary importance for cadherins cell-adhesion properties. This Drosophila melanogaster (Fruit fly) protein is Catenin alpha.